The following is a 221-amino-acid chain: GTP cyclohydrolase III (221 aa).

Belongs to the archaeal-type GTP cyclohydrolase family.

It catalyses the reaction GTP + 3 H2O = 2-amino-5-formylamino-6-(5-phospho-D-ribosylamino)pyrimidin-4(3H)-one + 2 phosphate + 2 H(+). In terms of biological role, catalyzes the formation of 2-amino-5-formylamino-6-ribofuranosylamino-4(3H)-pyrimidinone ribonucleotide monophosphate and inorganic phosphate from GTP. Also has an independent pyrophosphate phosphohydrolase activity. The protein is GTP cyclohydrolase III of Pyrobaculum aerophilum (strain ATCC 51768 / DSM 7523 / JCM 9630 / CIP 104966 / NBRC 100827 / IM2).